Consider the following 376-residue polypeptide: Quinolinate synthase (376 aa).

Iminosuccinate is bound by residues H57 and S78. C123 lines the [4Fe-4S] cluster pocket. Iminosuccinate contacts are provided by residues Y149–N151 and S166. Residue C210 participates in [4Fe-4S] cluster binding. Residues H236–E238 and T253 each bind iminosuccinate. C307 is a binding site for [4Fe-4S] cluster.

This sequence belongs to the quinolinate synthase family. Type 1 subfamily. [4Fe-4S] cluster is required as a cofactor.

The protein resides in the cytoplasm. The catalysed reaction is iminosuccinate + dihydroxyacetone phosphate = quinolinate + phosphate + 2 H2O + H(+). It functions in the pathway cofactor biosynthesis; NAD(+) biosynthesis; quinolinate from iminoaspartate: step 1/1. Catalyzes the condensation of iminoaspartate with dihydroxyacetone phosphate to form quinolinate. In Paraburkholderia phymatum (strain DSM 17167 / CIP 108236 / LMG 21445 / STM815) (Burkholderia phymatum), this protein is Quinolinate synthase.